We begin with the raw amino-acid sequence, 214 residues long: Probable transaldolase (214 aa).

Lys-83 serves as the catalytic Schiff-base intermediate with substrate.

The protein belongs to the transaldolase family. Type 3B subfamily.

It localises to the cytoplasm. The enzyme catalyses D-sedoheptulose 7-phosphate + D-glyceraldehyde 3-phosphate = D-erythrose 4-phosphate + beta-D-fructose 6-phosphate. It functions in the pathway carbohydrate degradation; pentose phosphate pathway; D-glyceraldehyde 3-phosphate and beta-D-fructose 6-phosphate from D-ribose 5-phosphate and D-xylulose 5-phosphate (non-oxidative stage): step 2/3. In terms of biological role, transaldolase is important for the balance of metabolites in the pentose-phosphate pathway. The chain is Probable transaldolase from Desulfatibacillum aliphaticivorans.